Consider the following 284-residue polypeptide: Bifunctional protein FolD (284 aa).

NADP(+) contacts are provided by residues 166–168 and I232; that span reads GAS.

Belongs to the tetrahydrofolate dehydrogenase/cyclohydrolase family. Homodimer.

It catalyses the reaction (6R)-5,10-methylene-5,6,7,8-tetrahydrofolate + NADP(+) = (6R)-5,10-methenyltetrahydrofolate + NADPH. It carries out the reaction (6R)-5,10-methenyltetrahydrofolate + H2O = (6R)-10-formyltetrahydrofolate + H(+). Its pathway is one-carbon metabolism; tetrahydrofolate interconversion. Catalyzes the oxidation of 5,10-methylenetetrahydrofolate to 5,10-methenyltetrahydrofolate and then the hydrolysis of 5,10-methenyltetrahydrofolate to 10-formyltetrahydrofolate. The sequence is that of Bifunctional protein FolD from Glaesserella parasuis serovar 5 (strain SH0165) (Haemophilus parasuis).